A 102-amino-acid chain; its full sequence is Large ribosomal subunit protein bL21 (102 aa).

This sequence belongs to the bacterial ribosomal protein bL21 family. As to quaternary structure, part of the 50S ribosomal subunit. Contacts protein L20.

This protein binds to 23S rRNA in the presence of protein L20. The chain is Large ribosomal subunit protein bL21 from Saccharopolyspora erythraea (strain ATCC 11635 / DSM 40517 / JCM 4748 / NBRC 13426 / NCIMB 8594 / NRRL 2338).